The chain runs to 407 residues: 1-deoxy-D-xylulose 5-phosphate reductoisomerase (407 aa).

Residues Thr-25, Gly-26, Ser-27, Ile-28, Asn-53, and Asn-136 each coordinate NADPH. Lys-137 contributes to the 1-deoxy-D-xylulose 5-phosphate binding site. Residue Glu-138 participates in NADPH binding. Asp-162 serves as a coordination point for Mn(2+). Positions 163, 164, 188, and 211 each coordinate 1-deoxy-D-xylulose 5-phosphate. Mn(2+) is bound at residue Glu-164. An NADPH-binding site is contributed by Gly-217. Residues Ser-224, Asn-229, Lys-230, and Glu-233 each contribute to the 1-deoxy-D-xylulose 5-phosphate site. Glu-233 is a Mn(2+) binding site.

The protein belongs to the DXR family. It depends on Mg(2+) as a cofactor. Mn(2+) serves as cofactor.

It carries out the reaction 2-C-methyl-D-erythritol 4-phosphate + NADP(+) = 1-deoxy-D-xylulose 5-phosphate + NADPH + H(+). It participates in isoprenoid biosynthesis; isopentenyl diphosphate biosynthesis via DXP pathway; isopentenyl diphosphate from 1-deoxy-D-xylulose 5-phosphate: step 1/6. Its function is as follows. Catalyzes the NADPH-dependent rearrangement and reduction of 1-deoxy-D-xylulose-5-phosphate (DXP) to 2-C-methyl-D-erythritol 4-phosphate (MEP). In Rhodopseudomonas palustris (strain HaA2), this protein is 1-deoxy-D-xylulose 5-phosphate reductoisomerase.